We begin with the raw amino-acid sequence, 384 residues long: MKFIDEAKIEVAAGKGGNGATSFRREKFVPRGGPDGGDGGKGGSVWAEADENTNTLVEYRFVKRYQAKNGEKGHGSDRYGAGADDIVLKMPVGTLIRDLDTGETVADLTYHGQRVCLAKGGKGGLGNIHFKSSVNRAPKQSTPGEEGEARSLQLELKVLADVGLLGMPNAGKSTLITAVSAARPKIANYPFTTLHPNLGVVRIDENHSFVMADIPGLIEGAAEGAGLGHRFLKHLSRTGLLLHVVDLAPFDETVNPAEEALAIINELRKYDEELYGKPRWLVLNKLDMLDEEEAQTRTAAFLEAVGWDYPKPDDRFQFDMETPRLFQISALTHQGTQELVHQINQYLTEKKRIEAEKAEAEKAAANVEIIEQQPKTDTGVFKPE.

Residues 1-159 enclose the Obg domain; it reads MKFIDEAKIE…RSLQLELKVL (159 aa). Residues 20–46 are disordered; that stretch reads ATSFRREKFVPRGGPDGGDGGKGGSVW. A compositionally biased stretch (gly residues) spans 33-43; sequence GPDGGDGGKGG. The OBG-type G domain occupies 160–348; the sequence is ADVGLLGMPN…LVHQINQYLT (189 aa). Residues 166–173, 191–195, 213–216, 284–287, and 329–331 each bind GTP; these read GMPNAGKS, FTTLH, DIPG, NKLD, and SAL. The Mg(2+) site is built by Ser-173 and Thr-193.

The protein belongs to the TRAFAC class OBG-HflX-like GTPase superfamily. OBG GTPase family. Monomer. Mg(2+) is required as a cofactor.

Its subcellular location is the cytoplasm. Its function is as follows. An essential GTPase which binds GTP, GDP and possibly (p)ppGpp with moderate affinity, with high nucleotide exchange rates and a fairly low GTP hydrolysis rate. Plays a role in control of the cell cycle, stress response, ribosome biogenesis and in those bacteria that undergo differentiation, in morphogenesis control. This chain is GTPase Obg, found in Neisseria meningitidis serogroup B (strain ATCC BAA-335 / MC58).